The primary structure comprises 105 residues: U1-sicaritoxin-Li1b (105 aa).

Residues 1-19 form the signal peptide; sequence MKLLFEGLLVLVLIAFVVA. Residues 20 to 36 constitute a propeptide that is removed on maturation; it reads EFESDAEKWEALITQER. Disulfide bonds link Cys-38–Cys-55, Cys-46–Cys-60, Cys-54–Cys-73, and Cys-62–Cys-71. Arg-82 carries the arginine amide modification. A propeptide spanning residues 86–105 is cleaved from the precursor; it reads ALMVDPETHRMLSLHRLSEE.

This sequence belongs to the neurotoxin 28 (Litx) family. Expressed by the venom gland.

The protein localises to the secreted. In terms of biological role, toxin active against insects (S.frugiperda larvae). May act on sodium (Nav) or calcium (Cav) channels. The polypeptide is U1-sicaritoxin-Li1b (Loxosceles intermedia (Brown spider)).